The following is a 505-amino-acid chain: DNA primase DnaG (505 aa).

Positions 167 to 241 (DAVIVVEGRA…DVDYVAFAPP (75 aa)) constitute a Toprim domain. Residues glutamate 173, aspartate 215, and aspartate 217 each coordinate Mg(2+). The disordered stretch occupies residues 268–410 (DEPNLREAAT…PLDNEPRSIE (143 aa)). Over residues 318–327 (AGVVAGGARS) the composition is skewed to low complexity. Acidic residues-rich tracts occupy residues 349-376 (GEVD…DAEF) and 384-402 (PNLD…DAPL).

This sequence belongs to the archaeal DnaG primase family. In terms of assembly, forms a ternary complex with MCM helicase and DNA. Mg(2+) serves as cofactor.

It carries out the reaction ssDNA + n NTP = ssDNA/pppN(pN)n-1 hybrid + (n-1) diphosphate.. Its function is as follows. RNA polymerase that catalyzes the synthesis of short RNA molecules used as primers for DNA polymerase during DNA replication. This Halorubrum lacusprofundi (strain ATCC 49239 / DSM 5036 / JCM 8891 / ACAM 34) protein is DNA primase DnaG.